Here is a 469-residue protein sequence, read N- to C-terminus: Calcium-binding mitochondrial carrier protein SCaMC-2-A (469 aa).

Over 1–189 (MLCLCLYVPV…EHLTGMWWRH (189 aa)) the chain is Mitochondrial intermembrane. 3 consecutive EF-hand domains span residues 47-80 (TYRR…QDHE), 78-113 (DHEK…LGVH), and 114-149 (ISLK…QPAE). Ca(2+) is bound by residues aspartate 64, glutamine 66, and glutamate 71. 3 Solcar repeats span residues 184–270 (GMWW…IKRV), 278–363 (LGIS…LKNT), and 375–463 (PGVF…IKST). A helical transmembrane segment spans residues 190 to 207 (LVSGGGAGAVSRTCTAPL). At 208–244 (DRLKVLMQVHGCQGKSMCLMSGLTQMIKEGGVRSLWR) the chain is on the mitochondrial matrix side. Residues 245–264 (GNGINVIKIAPETALKFMAY) form a helical membrane-spanning segment. At 265–287 (EQIKRVMGSSQETLGISERFVAG) the chain is on the mitochondrial intermembrane side. The chain crosses the membrane as a helical span at residues 288–301 (SLAGVIAQSTIYPM). Over 302–337 (EVLKTRLALRKTGQYKGISDCAKHILKTEGMSAFYK) the chain is Mitochondrial matrix. A helical membrane pass occupies residues 338-357 (GYVPNMLGIIPYAGIDLAVY). The Mitochondrial intermembrane segment spans residues 358–380 (ETLKNTWLQRYGTENADPGVFVL). A helical transmembrane segment spans residues 381–398 (LACGTVSSTCGQLASYPL). Topologically, residues 399–437 (ALIRTRMQAQASVEGSSQVSMTGLFKQIMKTEGPTGLYR) are mitochondrial matrix. A helical transmembrane segment spans residues 438 to 457 (GLTPNFLKVIPAVSISYVVY). The Mitochondrial intermembrane portion of the chain corresponds to 458–469 (EHIKSTLGVRSR).

Belongs to the mitochondrial carrier (TC 2.A.29) family.

Its subcellular location is the mitochondrion inner membrane. Calcium-dependent mitochondrial solute carrier. In Danio rerio (Zebrafish), this protein is Calcium-binding mitochondrial carrier protein SCaMC-2-A (slc25a25a).